Reading from the N-terminus, the 488-residue chain is Glutamate--tRNA ligase (488 aa).

Residues 12 to 22 (PSPTGYMHVGN) carry the 'HIGH' region motif. Cysteine 109, cysteine 111, cysteine 136, and histidine 138 together coordinate Zn(2+). Positions 253 to 257 (KLSKR) match the 'KMSKS' region motif. ATP is bound at residue lysine 256.

Belongs to the class-I aminoacyl-tRNA synthetase family. Glutamate--tRNA ligase type 1 subfamily. Monomer. Requires Zn(2+) as cofactor.

It localises to the cytoplasm. The catalysed reaction is tRNA(Glu) + L-glutamate + ATP = L-glutamyl-tRNA(Glu) + AMP + diphosphate. In terms of biological role, catalyzes the attachment of glutamate to tRNA(Glu) in a two-step reaction: glutamate is first activated by ATP to form Glu-AMP and then transferred to the acceptor end of tRNA(Glu). This chain is Glutamate--tRNA ligase, found in Clostridium tetani (strain Massachusetts / E88).